A 328-amino-acid chain; its full sequence is Diaminopimelate epimerase (328 aa).

Substrate-binding residues include Asn14 and Asn73. Cys82 acts as the Proton donor in catalysis. Substrate contacts are provided by residues 83-84 (GN), Asn170, Asn206, and 224-225 (ER). Residue Cys233 is the Proton acceptor of the active site. Position 234–235 (234–235 (GT)) interacts with substrate.

The protein belongs to the diaminopimelate epimerase family. As to quaternary structure, homodimer.

It is found in the cytoplasm. The enzyme catalyses (2S,6S)-2,6-diaminopimelate = meso-2,6-diaminopimelate. It participates in amino-acid biosynthesis; L-lysine biosynthesis via DAP pathway; DL-2,6-diaminopimelate from LL-2,6-diaminopimelate: step 1/1. Functionally, catalyzes the stereoinversion of LL-2,6-diaminopimelate (L,L-DAP) to meso-diaminopimelate (meso-DAP), a precursor of L-lysine and an essential component of the bacterial peptidoglycan. This is Diaminopimelate epimerase from Listeria welshimeri serovar 6b (strain ATCC 35897 / DSM 20650 / CCUG 15529 / CIP 8149 / NCTC 11857 / SLCC 5334 / V8).